A 260-amino-acid polypeptide reads, in one-letter code: Apolipoprotein A-I (260 aa).

A signal peptide spans M1–A18. A 3 X approximate tandem repeats region spans residues A32–K63. 2 repeat units span residues T64 to S85 and M87 to N107. The interval T64–S260 is 10 X approximate tandem repeats. Residues V108–A118 form a 3; half-length repeat. 5 consecutive repeat copies span residues P119–T140, P141–E162, P163–M184, P185–Q206, and P207–T225. Residues V226–T236 form a 9; half-length repeat. The stretch at P237–S260 is repeat 10.

The protein belongs to the apolipoprotein A1/A4/E family. Strong expression in liver with lower expression in intestine.

The protein localises to the secreted. Functionally, participates in the reverse transport of cholesterol from tissues to the liver for excretion by promoting cholesterol efflux from tissues and by acting as a cofactor for the lecithin cholesterol acyltransferase (LCAT). The chain is Apolipoprotein A-I (apoa1) from Sparus aurata (Gilthead sea bream).